A 497-amino-acid polypeptide reads, in one-letter code: Vacuolar-processing enzyme (497 aa).

The first 31 residues, 1 to 31 (METHKSLLFFTNYVLFLVFTLSFLPIPGLLA), serve as a signal peptide directing secretion. Residue His180 is part of the active site. Residue Cys222 is the Nucleophile of the active site. A disulfide bridge connects residues Cys255 and Cys269. 2 N-linked (GlcNAc...) asparagine glycosylation sites follow: Asn320 and Asn374. Cystine bridges form between Cys433/Cys463 and Cys445/Cys480.

Belongs to the peptidase C13 family.

Functionally, asparagine-specific endopeptidase involved in the processing of vacuolar seed protein precursors into the mature forms. In Ricinus communis (Castor bean), this protein is Vacuolar-processing enzyme.